The sequence spans 1551 residues: Dual oxidase 1 (1551 aa).

The signal sequence occupies residues 1–21 (MAVYSAVAWILLFGVLASLGA). Residues 22 to 596 (QNPVSWEVQR…YFKGSGFGFG (575 aa)) lie on the Extracellular side of the membrane. The peroxidase-like; mediates peroxidase activity stretch occupies residues 26-593 (SWEVQRFDGW…VRDYFKGSGF (568 aa)). 5 N-linked (GlcNAc...) asparagine glycosylation sites follow: Asn94, Asn342, Asn354, Asn461, and Asn534. A helical membrane pass occupies residues 597–617 (LTIGTLCCFPLVSLLSAWIVA). Topologically, residues 618–1044 (RLRMRNFKRL…KRFIENYRRH (427 aa)) are cytoplasmic. EF-hand domains are found at residues 815-850 (PQDM…FMKG), 851-886 (SPEE…FIEI), and 895-930 (QLAE…HDSD). Ca(2+) contacts are provided by Asp828, Asp830, Asn832, Tyr834, Glu839, Asp864, Asp866, Asn868, and Glu875. Positions 956-1248 (YISQEKICPS…GSFALIQMPR (293 aa)) are interaction with TXNDC11. The helical transmembrane segment at 1045 to 1065 (IGCVAVFYTITGALFLERAYY) threads the bilayer. At 1066–1080 (YAFAAHHSGITDTTR) the chain is on the extracellular side. A helical membrane pass occupies residues 1081-1101 (VGIILSRGTAASISFMFSYIL). The region spanning 1087-1269 (RGTAASISFM…YVGDKLVSLS (183 aa)) is the Ferric oxidoreductase domain. At 1102-1136 (LTMCRNLITFLRETFLNRYIPFDAAVDFHRFIAST) the chain is on the cytoplasmic side. A helical membrane pass occupies residues 1137–1157 (AIILTVLHSAGHVVNVYLFSI). Over 1158-1188 (SPLSVLSCLFPDLFHDDGSEFPQKYYWWFFQ) the chain is Extracellular. A helical transmembrane segment spans residues 1189 to 1209 (TVPGLTGVLLLLALAIMYVFA). Over 1210-1226 (SHHFRRRSFRGFWLTHH) the chain is Cytoplasmic. A helical membrane pass occupies residues 1227–1247 (LYIFLYILLIIHGSFALIQMP). Position 1248 (Arg1248) is a topological domain, extracellular. Residues 1249–1269 (FHIFFLVPAIIYVGDKLVSLS) form a helical membrane-spanning segment. Positions 1270 to 1376 (RKKVEISVVK…DGPFGEGHQE (107 aa)) constitute an FAD-binding FR-type domain. The Cytoplasmic segment spans residues 1270 to 1551 (RKKVEISVVK…THFSHHYENF (282 aa)).

The protein in the N-terminal section; belongs to the peroxidase family. Interacts with TXNDC11, TPO and CYBA. In terms of processing, N-glycosylated. Expressed in thyrocytes (at protein level).

It localises to the apical cell membrane. It carries out the reaction NADH + O2 + H(+) = H2O2 + NAD(+). The enzyme catalyses NADPH + O2 + H(+) = H2O2 + NADP(+). Its pathway is hormone biosynthesis; thyroid hormone biosynthesis. Its activity is regulated as follows. The NADPH oxidase activity is calcium-dependent. Peroxidase activity is inhibited by aminobenzohydrazide. Generates hydrogen peroxide which is required for the activity of thyroid peroxidase/TPO and lactoperoxidase/LPO. Plays a role in thyroid hormones synthesis and lactoperoxidase-mediated antimicrobial defense at the surface of mucosa. May have its own peroxidase activity through its N-terminal peroxidase-like domain. In Rattus norvegicus (Rat), this protein is Dual oxidase 1 (Duox1).